A 600-amino-acid polypeptide reads, in one-letter code: Aspartate--tRNA ligase (600 aa).

Residue Glu-175 coordinates L-aspartate. The tract at residues 199–202 (QLFK) is aspartate. An L-aspartate-binding site is contributed by Arg-221. ATP contacts are provided by residues 221–223 (RDE) and Gln-230. His-448 serves as a coordination point for L-aspartate. Glu-484 serves as a coordination point for ATP. L-aspartate is bound at residue Arg-491. 536–539 (GLDR) is a binding site for ATP.

Belongs to the class-II aminoacyl-tRNA synthetase family. Type 1 subfamily. In terms of assembly, homodimer.

It localises to the cytoplasm. It carries out the reaction tRNA(Asp) + L-aspartate + ATP = L-aspartyl-tRNA(Asp) + AMP + diphosphate. Its function is as follows. Catalyzes the attachment of L-aspartate to tRNA(Asp) in a two-step reaction: L-aspartate is first activated by ATP to form Asp-AMP and then transferred to the acceptor end of tRNA(Asp). This Limosilactobacillus reuteri (strain DSM 20016) (Lactobacillus reuteri) protein is Aspartate--tRNA ligase.